The chain runs to 92 residues: Bombyxin A-3 (92 aa).

An N-terminal signal peptide occupies residues 1-19 (MKILLAIALMLSTVMWVST). Gln-20 is subject to Pyrrolidone carboxylic acid. Disulfide bonds link Cys-29–Cys-79, Cys-41–Cys-92, and Cys-78–Cys-83. Positions 50-70 (SDAQYVSYGSAWLMPYSEGRG) are cleaved as a propeptide — c peptide like.

The protein belongs to the insulin family. As to quaternary structure, heterodimer of a B chain and an A chain linked by two disulfide bonds.

It is found in the secreted. Its function is as follows. Brain peptide responsible for activation of prothoracic glands to produce ecdysone in insects. The sequence is that of Bombyxin A-3 (BBXA3) from Bombyx mori (Silk moth).